The chain runs to 4427 residues: Dynein axonemal heavy chain 2 (4427 aa).

Positions 1–73 (MSSKAEKKQR…AQSEESVEPE (73 aa)) are disordered. The stem stretch occupies residues 1–1764 (MSSKAEKKQR…VIRQTNTQFQ (1764 aa)). Positions 14–23 (RGSSQASWSG) are enriched in polar residues. The segment covering 50–59 (LPKEEPEPRL) has biased composition (basic and acidic residues). The TPR 1 repeat unit spans residues 1404–1439 (EDNQVALSTMKASRFVKAFEKDVDHWERCLSLILEV). 4 AAA regions span residues 1765–1986 (YNYE…LLRY), 2046–2273 (ETVE…DNCK), 2378–2625 (RYPP…VFQG), and 2722–2974 (EYNL…LRRH). ATP contacts are provided by residues 1803 to 1810 (GPAGTGKT), 2084 to 2091 (GCTGSGKT), and 2416 to 2423 (GPVGTGKT). The stretch at 2721 to 2754 (NEYNLSPSVVPMQLVLFREAIEHITRIVRVIGQP) is one TPR 2 repeat. Residue 2762–2769 (GIGGSGRQ) participates in ATP binding. The segment at 2989 to 3272 (YKKLLGEKRQ…EELRKKSEEM (284 aa)) is stalk. Positions 3012 to 3049 (FKIDETREKVQVMSLELEDAKKKVAEFQKQCEEYLVII) form a coiled coil. The stretch at 3072–3105 (VEEIKCQALADNAQKDLEEALPALEEAMRALESL) is one TPR 3 repeat. Coiled-coil stretches lie at residues 3216–3304 (KRIR…EEDL) and 3523–3567 (VRKE…GSLL). 2 AAA regions span residues 3358-3588 (LCNP…EVTE) and 3804-4023 (VTSF…LLSL). TPR repeat units follow at residues 4072 to 4104 (STPFHRLSALETYFIPKDGSLASYKEYISLLPG) and 4105 to 4140 (MDPPEAFGQHPNADVASQITEAQTLFDTLLSLQPQI).

This sequence belongs to the dynein heavy chain family. As to quaternary structure, part of the axonemal inner dynein arm complex that consists of at least two heavy chains and a number of intermediate and light chains. Interacts with DNAI4. As to expression, expressed primarily in trachea and testis, 2 tissues containing axonemal structures. Also expressed in lung. Expressed in spermatozoa (at protein level).

It is found in the cytoplasm. It localises to the cytoskeleton. The protein localises to the cilium axoneme. The protein resides in the flagellum axoneme. As part of the axonemal inner dynein arm complex plays a central role in ciliary beat. Expressed in sperm flagellum, it is required for sperm motility. Dyneins are microtubule-based molecular motors possessing ATPase activities that can convert the chemical energy of ATP into relative sliding between adjacent microtubule doublets to generate ciliary bending. The polypeptide is Dynein axonemal heavy chain 2 (Homo sapiens (Human)).